We begin with the raw amino-acid sequence, 545 residues long: Vicilin Pis v 3.0101 (545 aa).

Positions 1–25 (MGSRTKFCLTLFLVSVLILCAGLAL) are cleaved as a signal peptide. 2 disordered regions span residues 62 to 93 (KEKK…HEPG) and 129 to 154 (REHS…DENP). Residues 82-93 (GRGDEFSTHEPG) show a composition bias toward basic and acidic residues. Positions 136 to 153 (DEEEEEEGDEEQEEEDEN) are enriched in acidic residues. A Cupin type-1 2 domain is found at 354 to 517 (TFNLFKKDPS…LAFKTKGEEV (164 aa)).

It belongs to the 7S seed storage protein family. Expressed in seed.

Seed storage protein. This Pistacia vera (Pistachio) protein is Vicilin Pis v 3.0101.